We begin with the raw amino-acid sequence, 67 residues long: Large ribosomal subunit protein bL31 (67 aa).

Zn(2+) contacts are provided by C16, C18, C36, and C39.

Belongs to the bacterial ribosomal protein bL31 family. Type A subfamily. Part of the 50S ribosomal subunit. It depends on Zn(2+) as a cofactor.

Binds the 23S rRNA. This is Large ribosomal subunit protein bL31 from Aliarcobacter butzleri (strain RM4018) (Arcobacter butzleri).